An 806-amino-acid polypeptide reads, in one-letter code: Portal protein (806 aa).

The interval 337–380 (SKRKILKVKSYDPETGEEEWNFYPENYVVNKEAGEEVQSFWVNE) is interaction with Cargo protein 1. Residues 783-792 (KKKAETDASI) are compositionally biased toward basic and acidic residues. Positions 783–806 (KKKAETDASIKRQALRKKSSTTNK) are disordered. Positions 795–806 (QALRKKSSTTNK) are enriched in basic residues.

Homododecamer. Interacts with the Cargo protein 1. Interacts with the major capsid protein.

It localises to the virion. Functionally, forms the portal vertex of the capsid. Probably involved in head assembly, genome packaging, tail attachment, and genome ejection. The chain is Portal protein from Bacteroides phage crAss001 (Bacteroides phage PhiCrAss001).